Reading from the N-terminus, the 123-residue chain is MPTINQLIRKRRKSSLARKKSPALQKCPQKRGVCLQVKTKTPKKPNSALRKVAWVRLSNGQEVIAYIGGEGHNLQEHSIVLIQGGRVKDLPGVRYHIVRGTLDCAAVKNRKQSRSRYGAKRPK.

A disordered region spans residues 1 to 25; sequence MPTINQLIRKRRKSSLARKKSPALQ. Positions 8-21 are enriched in basic residues; sequence IRKRRKSSLARKKS. D89 is modified (3-methylthioaspartic acid).

It belongs to the universal ribosomal protein uS12 family. Part of the 30S ribosomal subunit. Contacts proteins S8 and S17. May interact with IF1 in the 30S initiation complex.

Functionally, with S4 and S5 plays an important role in translational accuracy. Interacts with and stabilizes bases of the 16S rRNA that are involved in tRNA selection in the A site and with the mRNA backbone. Located at the interface of the 30S and 50S subunits, it traverses the body of the 30S subunit contacting proteins on the other side and probably holding the rRNA structure together. The combined cluster of proteins S8, S12 and S17 appears to hold together the shoulder and platform of the 30S subunit. The chain is Small ribosomal subunit protein uS12 from Chlamydia pneumoniae (Chlamydophila pneumoniae).